The chain runs to 192 residues: Ribosome maturation factor RimM (192 aa).

The region spanning 97–172 (EDEYYLADLI…VVLADPPALV (76 aa)) is the PRC barrel domain. Residues 168–192 (PPALVGEPEGPESPAEDDDGERHYD) form a disordered region.

Belongs to the RimM family. Binds ribosomal protein uS19.

It localises to the cytoplasm. In terms of biological role, an accessory protein needed during the final step in the assembly of 30S ribosomal subunit, possibly for assembly of the head region. Essential for efficient processing of 16S rRNA. May be needed both before and after RbfA during the maturation of 16S rRNA. It has affinity for free ribosomal 30S subunits but not for 70S ribosomes. The polypeptide is Ribosome maturation factor RimM (Caulobacter sp. (strain K31)).